A 510-amino-acid chain; its full sequence is NAD(P)H-quinone oxidoreductase subunit 2 A, chloroplastic (510 aa).

The next 13 membrane-spanning stretches (helical) occupy residues 24–44 (LLLF…GLIL), 57–77 (IPWL…ALLF), 99–119 (IFQF…VEYI), 124–144 (MAIT…MFLC), 149–169 (LITI…LSGY), 183–203 (YLLM…WLYG), 227–247 (PGIS…LSPA), 295–315 (WHLL…LIAI), 323–343 (MLAY…IVGD), 354–374 (YMLF…SFGL), 395–415 (ALSL…AGFF), 418–438 (LHLF…IGLL), and 484–504 (MIVC…IIAI).

This sequence belongs to the complex I subunit 2 family. In terms of assembly, NDH is composed of at least 16 different subunits, 5 of which are encoded in the nucleus.

It is found in the plastid. The protein localises to the chloroplast thylakoid membrane. It catalyses the reaction a plastoquinone + NADH + (n+1) H(+)(in) = a plastoquinol + NAD(+) + n H(+)(out). The catalysed reaction is a plastoquinone + NADPH + (n+1) H(+)(in) = a plastoquinol + NADP(+) + n H(+)(out). Its function is as follows. NDH shuttles electrons from NAD(P)H:plastoquinone, via FMN and iron-sulfur (Fe-S) centers, to quinones in the photosynthetic chain and possibly in a chloroplast respiratory chain. The immediate electron acceptor for the enzyme in this species is believed to be plastoquinone. Couples the redox reaction to proton translocation, and thus conserves the redox energy in a proton gradient. This Carica papaya (Papaya) protein is NAD(P)H-quinone oxidoreductase subunit 2 A, chloroplastic.